Reading from the N-terminus, the 437-residue chain is MLLGDLRRTHYSKDIEPEMDGDEVTVMGWVHEIRDLGGIIFVLLRDRDGLIQITAPSKKIEKDLFKSIRKLKKESVVAFGGTVQESGKAPGGFEIIPSFLKVLNISKQPLPLDPTEKVKAEIDTRLDARFLDLRKPSVSAIFKIKSRMLHSVRVFLEEQGFLEINTPKLVASATEGGTELFPITYFEREAFLGQSPQLYKQIMMSTGLDRVYEIAPIFRAEEHDTLRHLNEVISIDIEASFVDHEDVMKILENLVVRVIEDVNEHCTDALETLGRTLEVPETPFERLEYDEAVEMVNSKGVPMKHGEDLPRAAEKALGEIMDGYYFITSWPTAIKPFYVMPDEDDPERSHAFDLMYRDLEISSGAMRVHQHDLLVEKIKRQGLNPDSFESYLSAFEYGMPPHAGWGLGAERFNMTLTGLKNIRETVLFPRDRRRLTP.

L-aspartate is bound at residue Glu175. The aspartate stretch occupies residues 197-200; that stretch reads QLYK. Arg219 is an L-aspartate binding site. ATP-binding positions include 219-221, 227-229, and Glu360; these read RAE and RHL. Mg(2+)-binding residues include Glu360 and Ser363. Residues Ser363 and Arg367 each coordinate L-aspartate. 408 to 411 serves as a coordination point for ATP; that stretch reads GAER.

Belongs to the class-II aminoacyl-tRNA synthetase family. Type 2 subfamily. In terms of assembly, homodimer. Mg(2+) serves as cofactor.

The protein localises to the cytoplasm. The catalysed reaction is tRNA(Asx) + L-aspartate + ATP = L-aspartyl-tRNA(Asx) + AMP + diphosphate. Aspartyl-tRNA synthetase with relaxed tRNA specificity since it is able to aspartylate not only its cognate tRNA(Asp) but also tRNA(Asn). Reaction proceeds in two steps: L-aspartate is first activated by ATP to form Asp-AMP and then transferred to the acceptor end of tRNA(Asp/Asn). The chain is Aspartate--tRNA(Asp/Asn) ligase from Methanothermobacter thermautotrophicus (strain ATCC 29096 / DSM 1053 / JCM 10044 / NBRC 100330 / Delta H) (Methanobacterium thermoautotrophicum).